The sequence spans 456 residues: Imidazolonepropionase (456 aa).

The Fe(3+) site is built by H104 and H106. Positions 104 and 106 each coordinate Zn(2+). Residues R113, Y176, and H209 each coordinate 4-imidazolone-5-propanoate. Residue Y176 coordinates N-formimidoyl-L-glutamate. H274 contributes to the Fe(3+) binding site. H274 contacts Zn(2+). Q277 serves as a coordination point for 4-imidazolone-5-propanoate. Position 349 (D349) interacts with Fe(3+). D349 provides a ligand contact to Zn(2+). N-formimidoyl-L-glutamate is bound by residues N351 and G353. S354 is a binding site for 4-imidazolone-5-propanoate.

This sequence belongs to the metallo-dependent hydrolases superfamily. HutI family. It depends on Zn(2+) as a cofactor. The cofactor is Fe(3+).

Its subcellular location is the cytoplasm. It catalyses the reaction 4-imidazolone-5-propanoate + H2O = N-formimidoyl-L-glutamate. Its pathway is amino-acid degradation; L-histidine degradation into L-glutamate; N-formimidoyl-L-glutamate from L-histidine: step 3/3. Functionally, catalyzes the hydrolytic cleavage of the carbon-nitrogen bond in imidazolone-5-propanoate to yield N-formimidoyl-L-glutamate. It is the third step in the universal histidine degradation pathway. In Verminephrobacter eiseniae (strain EF01-2), this protein is Imidazolonepropionase.